The chain runs to 344 residues: MAP3K12-binding inhibitory protein 1 (344 aa).

At serine 91 the chain carries Phosphoserine. Residues lysine 94, lysine 118, lysine 129, lysine 139, lysine 153, and lysine 235 each participate in a glycyl lysine isopeptide (Lys-Gly) (interchain with G-Cter in SUMO2) cross-link. The tract at residues alanine 172 to proline 344 is interaction with MAP3K12. A leucine-zipper 1 region spans residues isoleucine 271–leucine 285. The residue at position 301 (lysine 301) is an N6-acetyllysine; alternate. A Glycyl lysine isopeptide (Lys-Gly) (interchain with G-Cter in SUMO2); alternate cross-link involves residue lysine 301. Glycyl lysine isopeptide (Lys-Gly) (interchain with G-Cter in SUMO2) cross-links involve residues lysine 304 and lysine 325. Residues leucine 314 to leucine 329 form a leucine-zipper 2 region.

As to quaternary structure, component of the ADA2A-containing complex (ATAC), composed of KAT14, KAT2A, TADA2L, TADA3L, ZZ3, MBIP, WDR5, YEATS2, CCDC101 and DR1. In the complex, it probably interacts directly with KAT2A, KAT14 and WDR5. In terms of tissue distribution, ubiquitous. High expression seen in the heart and lung.

The protein localises to the nucleus. It is found in the cytoplasm. Functionally, inhibits the MAP3K12 activity to induce the activation of the JNK/SAPK pathway. Component of the ATAC complex, a complex with histone acetyltransferase activity on histones H3 and H4. The protein is MAP3K12-binding inhibitory protein 1 (MBIP) of Homo sapiens (Human).